The primary structure comprises 345 residues: Fructose-1,6-bisphosphatase class 1 (345 aa).

The Mg(2+) site is built by Glu-90, Asp-109, Leu-111, and Asp-112. Substrate contacts are provided by residues 112-115 (DGSS) and Asn-200. Glu-272 provides a ligand contact to Mg(2+).

This sequence belongs to the FBPase class 1 family. As to quaternary structure, homotetramer. Mg(2+) is required as a cofactor.

The protein resides in the cytoplasm. It carries out the reaction beta-D-fructose 1,6-bisphosphate + H2O = beta-D-fructose 6-phosphate + phosphate. It participates in carbohydrate biosynthesis; gluconeogenesis. This is Fructose-1,6-bisphosphatase class 1 from Bradyrhizobium diazoefficiens (strain JCM 10833 / BCRC 13528 / IAM 13628 / NBRC 14792 / USDA 110).